A 444-amino-acid chain; its full sequence is Xylose isomerase (444 aa).

Mg(2+) is bound by residues Asp307 and Asp309.

The protein belongs to the xylose isomerase family. In terms of assembly, homotetramer. Mg(2+) serves as cofactor.

It localises to the cytoplasm. The catalysed reaction is alpha-D-xylose = alpha-D-xylulofuranose. The sequence is that of Xylose isomerase from Thermotoga neapolitana (strain ATCC 49049 / DSM 4359 / NBRC 107923 / NS-E).